Here is a 391-residue protein sequence, read N- to C-terminus: 3-ketoacyl-CoA thiolase (391 aa).

The active-site Acyl-thioester intermediate is the cysteine 95. Residues histidine 347 and cysteine 377 each act as proton acceptor in the active site.

Belongs to the thiolase-like superfamily. Thiolase family. Heterotetramer of two alpha chains (FadB) and two beta chains (FadA).

It is found in the cytoplasm. It carries out the reaction an acyl-CoA + acetyl-CoA = a 3-oxoacyl-CoA + CoA. It participates in lipid metabolism; fatty acid beta-oxidation. Functionally, catalyzes the final step of fatty acid oxidation in which acetyl-CoA is released and the CoA ester of a fatty acid two carbons shorter is formed. In Hahella chejuensis (strain KCTC 2396), this protein is 3-ketoacyl-CoA thiolase.